The chain runs to 133 residues: Small ribosomal subunit protein uS11 (133 aa).

This sequence belongs to the universal ribosomal protein uS11 family. Part of the 30S ribosomal subunit.

Functionally, located on the platform of the 30S subunit. This Hyperthermus butylicus (strain DSM 5456 / JCM 9403 / PLM1-5) protein is Small ribosomal subunit protein uS11.